The chain runs to 164 residues: NADH-quinone oxidoreductase subunit I (164 aa).

4Fe-4S ferredoxin-type domains are found at residues 56 to 85 and 95 to 124; these read RRYE…IEAE and TRYD…EGPN. The [4Fe-4S] cluster site is built by cysteine 65, cysteine 68, cysteine 71, cysteine 75, cysteine 104, cysteine 107, cysteine 110, and cysteine 114.

The protein belongs to the complex I 23 kDa subunit family. NDH-1 is composed of 14 different subunits. Subunits NuoA, H, J, K, L, M, N constitute the membrane sector of the complex. The cofactor is [4Fe-4S] cluster.

The protein localises to the cell inner membrane. It carries out the reaction a quinone + NADH + 5 H(+)(in) = a quinol + NAD(+) + 4 H(+)(out). In terms of biological role, NDH-1 shuttles electrons from NADH, via FMN and iron-sulfur (Fe-S) centers, to quinones in the respiratory chain. The immediate electron acceptor for the enzyme in this species is believed to be ubiquinone. Couples the redox reaction to proton translocation (for every two electrons transferred, four hydrogen ions are translocated across the cytoplasmic membrane), and thus conserves the redox energy in a proton gradient. The protein is NADH-quinone oxidoreductase subunit I of Anaplasma phagocytophilum (strain HZ).